The sequence spans 739 residues: Lysine decarboxylase (739 aa).

Lysine 367 carries the N6-(pyridoxal phosphate)lysine modification. Basic and acidic residues predominate over residues 714–726 (ADEPGDKPSDTVK). The tract at residues 714-739 (ADEPGDKPSDTVKKAPGKKPSAAKKS) is disordered. A compositionally biased stretch (basic residues) spans 728 to 739 (APGKKPSAAKKS).

This sequence belongs to the Orn/Lys/Arg decarboxylase class-I family. Pyridoxal 5'-phosphate serves as cofactor.

The protein resides in the cytoplasm. The catalysed reaction is L-lysine + H(+) = cadaverine + CO2. The chain is Lysine decarboxylase from Hafnia alvei.